The following is a 361-amino-acid chain: Ferredoxin--NADP reductase 1 (361 aa).

FAD is bound by residues D44, Q52, Y57, A97, F142, D308, and S349.

This sequence belongs to the ferredoxin--NADP reductase type 2 family. Homodimer. It depends on FAD as a cofactor.

The catalysed reaction is 2 reduced [2Fe-2S]-[ferredoxin] + NADP(+) + H(+) = 2 oxidized [2Fe-2S]-[ferredoxin] + NADPH. This Cupriavidus necator (strain ATCC 17699 / DSM 428 / KCTC 22496 / NCIMB 10442 / H16 / Stanier 337) (Ralstonia eutropha) protein is Ferredoxin--NADP reductase 1.